A 173-amino-acid polypeptide reads, in one-letter code: Archaemetzincin (173 aa).

Histidine 130 serves as a coordination point for Zn(2+). Catalysis depends on glutamate 131, which acts as the Proton acceptor. Zn(2+) is bound by residues histidine 134, histidine 140, cysteine 141, cysteine 146, cysteine 165, and cysteine 168.

It belongs to the peptidase M54 family. Monomer. Requires Zn(2+) as cofactor.

Probable zinc metalloprotease whose natural substrate is unknown. This is Archaemetzincin from Halobacterium salinarum (strain ATCC 29341 / DSM 671 / R1).